Here is a 156-residue protein sequence, read N- to C-terminus: Phosphopantetheine adenylyltransferase (156 aa).

The protein belongs to the eukaryotic CoaD family.

The protein resides in the cytoplasm. It carries out the reaction (R)-4'-phosphopantetheine + ATP + H(+) = 3'-dephospho-CoA + diphosphate. It participates in cofactor biosynthesis; coenzyme A biosynthesis. In terms of biological role, reversibly transfers an adenylyl group from ATP to 4'-phosphopantetheine, yielding dephospho-CoA (dPCoA) and pyrophosphate. This Methanosarcina acetivorans (strain ATCC 35395 / DSM 2834 / JCM 12185 / C2A) protein is Phosphopantetheine adenylyltransferase.